Consider the following 192-residue polypeptide: Ion-translocating oxidoreductase complex subunit B (192 aa).

Residues 1–26 (MNAIWIAVAAVSLLGLAFGAILGYAS) are hydrophobic. Residues 32–91 (EDDPVVEKIDEILPQSQCGQCGYPGCRPYAEAISCNGEKINRCAPGGEAVMLKIAELLNV) form the 4Fe-4S domain. Cysteine 49, cysteine 52, cysteine 57, cysteine 74, cysteine 117, cysteine 120, cysteine 123, cysteine 127, cysteine 147, cysteine 150, cysteine 153, and cysteine 157 together coordinate [4Fe-4S] cluster. 4Fe-4S ferredoxin-type domains follow at residues 108–137 (MVAF…GATR) and 138–167 (AMHT…LQPV).

The protein belongs to the 4Fe4S bacterial-type ferredoxin family. RnfB subfamily. The complex is composed of six subunits: RsxA, RsxB, RsxC, RsxD, RsxE and RsxG. The cofactor is [4Fe-4S] cluster.

It localises to the cell inner membrane. Functionally, part of a membrane-bound complex that couples electron transfer with translocation of ions across the membrane. Required to maintain the reduced state of SoxR. The sequence is that of Ion-translocating oxidoreductase complex subunit B from Escherichia coli O17:K52:H18 (strain UMN026 / ExPEC).